The primary structure comprises 310 residues: tRNA-cytidine(32) 2-sulfurtransferase (310 aa).

A PP-loop motif motif is present at residues 45 to 50 (SGGKDS). [4Fe-4S] cluster contacts are provided by Cys120, Cys123, and Cys211.

Belongs to the TtcA family. As to quaternary structure, homodimer. Requires Mg(2+) as cofactor. [4Fe-4S] cluster serves as cofactor.

Its subcellular location is the cytoplasm. The enzyme catalyses cytidine(32) in tRNA + S-sulfanyl-L-cysteinyl-[cysteine desulfurase] + AH2 + ATP = 2-thiocytidine(32) in tRNA + L-cysteinyl-[cysteine desulfurase] + A + AMP + diphosphate + H(+). Its pathway is tRNA modification. Functionally, catalyzes the ATP-dependent 2-thiolation of cytidine in position 32 of tRNA, to form 2-thiocytidine (s(2)C32). The sulfur atoms are provided by the cysteine/cysteine desulfurase (IscS) system. The polypeptide is tRNA-cytidine(32) 2-sulfurtransferase (Shewanella oneidensis (strain ATCC 700550 / JCM 31522 / CIP 106686 / LMG 19005 / NCIMB 14063 / MR-1)).